The sequence spans 213 residues: Thymidine kinase (213 aa).

ATP is bound by residues 22 to 29 and 94 to 97; these read GSMFSGKT and DEAQ. The active-site Proton acceptor is E95. Zn(2+)-binding residues include C151, C154, C183, and C186. The segment at 185-213 is disordered; that stretch reads RCFQPPRPTSTSSLKAPAPAATAPRPELP. The segment covering 193–213 has biased composition (low complexity); that stretch reads TSTSSLKAPAPAATAPRPELP.

The protein belongs to the thymidine kinase family. In terms of assembly, homotetramer.

The protein localises to the cytoplasm. The enzyme catalyses thymidine + ATP = dTMP + ADP + H(+). The protein is Thymidine kinase of Rhodothermus sp. (strain ITI 518).